We begin with the raw amino-acid sequence, 411 residues long: POU domain, class 4, transcription factor 2 (411 aa).

The interval 29–95 (LHSASPGSSA…SEAMRRACLP (67 aa)) is disordered. Over residues 31 to 52 (SASPGSSAPAAPSASSPSSSSN) the composition is skewed to low complexity. Gly residues-rich tracts occupy residues 53-68 (AGGGGGGGGGGGGGGR) and 76-86 (GSGGSGGGGGS). Residues 93–239 (CLPTPPSNIF…MHQAALSMAH (147 aa)) form a required for transcriptional activation region. The short motif at 112-121 (RAEALAAVDI) is the POU-IV box element. The segment covering 154–168 (SAASSSSVPISHPSA) has biased composition (low complexity). Residues 154–190 (SAASSSSVPISHPSALAGTHHHHHHHHHHHHQPHQAL) are disordered. Residues 172–186 (THHHHHHHHHHHHQP) are compositionally biased toward basic residues. The Nuclear speckle targeting signal signature appears at 173–187 (HHHHHHHHHHHHQPH). The tract at residues 240–411 (AHGLPSHMGC…QKRMKYSAGI (172 aa)) is required for DNA-binding and transcriptional repression. In terms of domain architecture, POU-specific spans 252-329 (DVDADPRDLE…ILQAWLEEAE (78 aa)). Positions 347–406 (KKRKRTSIAAPEKRSLEAYFAIQPRPSSEKIAAIAEKLDLKKNVVRVWFCNQRQKQKRMK) form a DNA-binding region, homeobox.

This sequence belongs to the POU transcription factor family. Class-4 subfamily. As to quaternary structure, isoform 2: Interacts with POU4F1 isoform 1; this interaction inhibits both POU4F1 DNA-binding and transcriptional activities. Isoform 2: Interacts (C-terminus) with ESR1 (via DNA-binding domain); this interaction increases the estrogen receptor ESR1 transcriptional activity in a DNA- and ligand 17-beta-estradiol-independent manner. Isoform 2: Interacts (via C-terminus) with TP53 (via N-terminus). Interacts with DLX1 (via homeobox DNA-binding domain); this interaction suppresses DLX1-mediated transcriptional activity in postnatal retina enhancing retinal ganglion cell (RGC) differentiation. Interacts with DLX2 (via homeobox DNA-binding domain); this interaction enhances RGC differentiation. Isoform 1: Interacts (via C-terminus) with ISL1 (via C-terminus). Isoform 1: Interacts with ISL2. Isoform 1: Interacts with LHX2. As to expression, expressed in retinal ganglion cells (RGCs). Expressed in mature osteoclasts. Expressed in cells of layers of the superior colliculus and the adjacent periaqueductal gray (at protein level). Expressed in the brain, peripheral sensory nervous system and retina. Expressed in the optical, intermediate, and deep gray areas of the superior colliculus, the dorsal column of the mesencephalic and pontine central gray, and the lateral interpeduncular nucleus of the brain. Expressed predominantly in postmitotic, terminally differentiated neurons. Expressed in ganglion cell layer (GCL) of the retina.

It is found in the nucleus. It localises to the nucleus speckle. The protein resides in the cytoplasm. Functionally, tissue-specific DNA-binding transcription factor involved in the development and differentiation of target cells. Functions either as activator or repressor by modulating the rate of target gene transcription through RNA polymerase II enzyme in a promoter-dependent manner. Binds to the consensus octamer motif 5'-AT[A/T]A[T/A]T[A/T]A-3' of promoter of target genes. Plays a fundamental role in the gene regulatory network essential for retinal ganglion cell (RGC) differentiation. Binds to an octamer site to form a ternary complex with ISL1; cooperates positively with ISL1 and ISL2 to potentiate transcriptional activation of RGC target genes being involved in RGC fate commitment in the developing retina and RGC axon formation and pathfinding. Inhibits DLX1 and DLX2 transcriptional activities preventing DLX1- and DLX2-mediated ability to promote amacrine cell fate specification. In cooperation with TP53 potentiates transcriptional activation of BAX promoter activity increasing neuronal cell apoptosis. Negatively regulates BAX promoter activity in the absence of TP53. Acts as a transcriptional coactivator via its interaction with the transcription factor ESR1 by enhancing its effect on estrogen response element (ERE)-containing promoter. Antagonizes the transcriptional stimulatory activity of POU4F1 by preventing its binding to an octamer motif. Involved in TNFSF11-mediated terminal osteoclast differentiation. The protein is POU domain, class 4, transcription factor 2 of Mus musculus (Mouse).